Consider the following 128-residue polypeptide: MDLIQTLEQEEIARLAKNIPDFAPGDTVIVNVNVVEGTRKRAQAYEGVVISRRNRGLNSNFIVRKISSGEGVERTFQLYSPLIASIEVKRRGDVRRAKLYYLRERSGKSARIKEKLPQRRVVSKAAAE.

Belongs to the bacterial ribosomal protein bL19 family.

This protein is located at the 30S-50S ribosomal subunit interface and may play a role in the structure and function of the aminoacyl-tRNA binding site. The protein is Large ribosomal subunit protein bL19 of Herminiimonas arsenicoxydans.